Consider the following 213-residue polypeptide: MKELTLLKKIKGGKEMNEYYERMEELFKREFAKEYLELAEQYYGIEESYYEEEQKLDEEEREITDWTGQIDEVYSNITIDEDWLFEKLIKRIELGGKVYTLFVEPYNSLLHRKPIVVVLKPLKGSKKLEEIVAKAYYSRFYWMEDPFYRDILLSRAYEAENTIKEDPEKFEEFVKMAEVLKEHEDRFLNIENIGIKFVEKNLSEFTLGFDLEE.

This is an uncharacterized protein from Aquifex aeolicus (strain VF5).